The primary structure comprises 315 residues: Ribosomal protein L11 methyltransferase (315 aa).

4 residues coordinate S-adenosyl-L-methionine: threonine 163, glycine 184, aspartate 206, and asparagine 248.

Belongs to the methyltransferase superfamily. PrmA family.

The protein localises to the cytoplasm. The catalysed reaction is L-lysyl-[protein] + 3 S-adenosyl-L-methionine = N(6),N(6),N(6)-trimethyl-L-lysyl-[protein] + 3 S-adenosyl-L-homocysteine + 3 H(+). Its function is as follows. Methylates ribosomal protein L11. This is Ribosomal protein L11 methyltransferase from Lacticaseibacillus paracasei (strain ATCC 334 / BCRC 17002 / CCUG 31169 / CIP 107868 / KCTC 3260 / NRRL B-441) (Lactobacillus paracasei).